A 192-amino-acid chain; its full sequence is NADH dehydrogenase [ubiquinone] iron-sulfur protein 3 (192 aa).

The protein belongs to the complex I 30 kDa subunit family. As to quaternary structure, complex I is composed of about 45 different subunits. This is a component of the iron-sulfur (IP) fragment of the enzyme.

The protein localises to the mitochondrion inner membrane. The enzyme catalyses a ubiquinone + NADH + 5 H(+)(in) = a ubiquinol + NAD(+) + 4 H(+)(out). Core subunit of the mitochondrial membrane respiratory chain NADH dehydrogenase (Complex I) that is believed to belong to the minimal assembly required for catalysis. Complex I functions in the transfer of electrons from NADH to the respiratory chain. The immediate electron acceptor for the enzyme is believed to be ubiquinone. The polypeptide is NADH dehydrogenase [ubiquinone] iron-sulfur protein 3 (NAD9) (Beta vulgaris (Sugar beet)).